The primary structure comprises 127 residues: Putative iron-sulfur cluster insertion protein ErpA (127 aa).

Residues 1 to 14 (MNTPFNDGSGQTDP) are compositionally biased toward polar residues. The tract at residues 1–20 (MNTPFNDGSGQTDPMTDIPT) is disordered. Iron-sulfur cluster contacts are provided by Cys-55, Cys-119, and Cys-121.

It belongs to the HesB/IscA family. Homodimer. Iron-sulfur cluster serves as cofactor.

Required for insertion of 4Fe-4S clusters. The sequence is that of Putative iron-sulfur cluster insertion protein ErpA from Nitrosospira multiformis (strain ATCC 25196 / NCIMB 11849 / C 71).